The following is a 381-amino-acid chain: DNA double-strand break repair protein Mre11 (381 aa).

Residues Asp9, His11, Asp50, and Asp85 each coordinate Mn(2+). Catalysis depends on His86, which acts as the Proton donor. Positions 156, 187, and 189 each coordinate Mn(2+).

Belongs to the MRE11/RAD32 family. Homodimer. Forms a heterotetramer composed of two Mre11 subunits and two Rad50 subunits. Requires Mn(2+) as cofactor.

Nuclease activity is regulated by Rad50. Functionally, part of the Rad50/Mre11 complex, which is involved in the early steps of DNA double-strand break (DSB) repair. The complex may facilitate opening of the processed DNA ends to aid in the recruitment of HerA and NurA. Mre11 binds to DSB ends and has both double-stranded 3'-5' exonuclease activity and single-stranded endonuclease activity. This chain is DNA double-strand break repair protein Mre11, found in Saccharolobus solfataricus (strain ATCC 35092 / DSM 1617 / JCM 11322 / P2) (Sulfolobus solfataricus).